Reading from the N-terminus, the 240-residue chain is Dihydromonapterin reductase (240 aa).

Catalysis depends on tyrosine 152, which acts as the Proton acceptor.

Belongs to the short-chain dehydrogenases/reductases (SDR) family. FolM subfamily.

The enzyme catalyses (6S)-5,6,7,8-tetrahydrofolate + NADP(+) = 7,8-dihydrofolate + NADPH + H(+). The catalysed reaction is 7,8-dihydromonapterin + NADPH + H(+) = 5,6,7,8-tetrahydromonapterin + NADP(+). Its function is as follows. Catalyzes the reduction of dihydromonapterin to tetrahydromonapterin. Also has lower activity with dihydrofolate. The chain is Dihydromonapterin reductase (folM) from Shigella sonnei (strain Ss046).